Consider the following 232-residue polypeptide: dTTP/UTP pyrophosphatase (232 aa).

Aspartate 103 (proton acceptor) is an active-site residue.

This sequence belongs to the Maf family. YhdE subfamily. Requires a divalent metal cation as cofactor.

The protein localises to the cytoplasm. It catalyses the reaction dTTP + H2O = dTMP + diphosphate + H(+). The enzyme catalyses UTP + H2O = UMP + diphosphate + H(+). It carries out the reaction 5-methyl-UTP + H2O = 5-methyl-UMP + diphosphate + H(+). The catalysed reaction is psi-UTP + H2O = psi-UMP + diphosphate + H(+). Nucleoside triphosphate pyrophosphatase that hydrolyzes dTTP and UTP. Can also hydrolyze the modified nucleotides 5-methyl-UTP (m(5)UTP) and pseudo-UTP. Has weak activity with CTP. May have a dual role in cell division arrest and in preventing the incorporation of modified nucleotides into cellular nucleic acids. This is dTTP/UTP pyrophosphatase from Saccharomyces cerevisiae (strain ATCC 204508 / S288c) (Baker's yeast).